Here is a 396-residue protein sequence, read N- to C-terminus: Bifunctional enzyme Fae/Hps (396 aa).

The formaldehyde-activating enzyme stretch occupies residues methionine 1–isoleucine 161. Histidine 17 acts as the Proton donor in catalysis. Residues aspartate 19, leucine 48, lysine 66, threonine 68, and glutamine 83 each coordinate substrate. Residues methionine 162–phenylalanine 396 form a 3-hexulose-6-phosphate synthase region.

It in the N-terminal section; belongs to the formaldehyde-activating enzyme family. This sequence in the C-terminal section; belongs to the HPS/KGPDC family. HPS subfamily.

It catalyses the reaction 5,6,7,8-tetrahydromethanopterin + formaldehyde = 5,10-methylenetetrahydromethanopterin + H2O. The catalysed reaction is D-ribulose 5-phosphate + formaldehyde = D-arabino-hex-3-ulose 6-phosphate. The protein operates within carbohydrate biosynthesis; D-ribose 5-phosphate biosynthesis. Functionally, catalyzes the condensation of formaldehyde with tetrahydromethanopterin (H(4)MPT) to 5,10-methylenetetrahydromethanopterin. In terms of biological role, catalyzes the reversible formation of ribulose-5-phosphate and formaldehyde from 3-hexulose-6-phosphate. This is Bifunctional enzyme Fae/Hps from Methanocella arvoryzae (strain DSM 22066 / NBRC 105507 / MRE50).